The chain runs to 217 residues: Probable GTP-binding protein EngB (217 aa).

The EngB-type G domain occupies 44–217 (DRIEVCFAGR…TLRTIVATLG (174 aa)). Residues 52–59 (GRSNVGKS), 79–83 (GRTQE), 97–100 (DLPG), 164–167 (TKAD), and 198–200 (TSS) contribute to the GTP site. Residues serine 59 and threonine 81 each coordinate Mg(2+).

The protein belongs to the TRAFAC class TrmE-Era-EngA-EngB-Septin-like GTPase superfamily. EngB GTPase family. Requires Mg(2+) as cofactor.

Its function is as follows. Necessary for normal cell division and for the maintenance of normal septation. The protein is Probable GTP-binding protein EngB of Cereibacter sphaeroides (strain ATCC 17023 / DSM 158 / JCM 6121 / CCUG 31486 / LMG 2827 / NBRC 12203 / NCIMB 8253 / ATH 2.4.1.) (Rhodobacter sphaeroides).